The sequence spans 82 residues: Small ribosomal subunit protein bS16 (82 aa).

Belongs to the bacterial ribosomal protein bS16 family.

This Desulfosudis oleivorans (strain DSM 6200 / JCM 39069 / Hxd3) (Desulfococcus oleovorans) protein is Small ribosomal subunit protein bS16.